We begin with the raw amino-acid sequence, 431 residues long: Adenylosuccinate synthetase (431 aa).

GTP contacts are provided by residues 12–18 and 40–42; these read GDEGKGK and GHT. Residue Asp13 is the Proton acceptor of the active site. Residues Asp13 and Gly40 each coordinate Mg(2+). IMP is bound by residues 13-16, 38-41, Thr131, Arg145, Gln225, Thr240, and Arg304; these read DEGK and NAGH. Catalysis depends on His41, which acts as the Proton donor. Residue 300–306 participates in substrate binding; that stretch reads VNTGRPR. GTP is bound by residues Arg306, 332-334, and 414-416; these read KLD and STS.

Belongs to the adenylosuccinate synthetase family. Homodimer. It depends on Mg(2+) as a cofactor.

It is found in the cytoplasm. The enzyme catalyses IMP + L-aspartate + GTP = N(6)-(1,2-dicarboxyethyl)-AMP + GDP + phosphate + 2 H(+). It functions in the pathway purine metabolism; AMP biosynthesis via de novo pathway; AMP from IMP: step 1/2. In terms of biological role, plays an important role in the de novo pathway of purine nucleotide biosynthesis. Catalyzes the first committed step in the biosynthesis of AMP from IMP. The sequence is that of Adenylosuccinate synthetase from Rhizobium rhizogenes (strain K84 / ATCC BAA-868) (Agrobacterium radiobacter).